The following is a 418-amino-acid chain: MVTLITEKLQNQSLDDLTCKTYNINLYSSEKLNKSGSLFSFEINEDSPWKALNGGCPIQTDARNSAYPFPVCPFSTGPASNGALQWQQEPSSTSMVSGWISELNLNENSGQPLAPPTKRHCRSLSEPDELARCRSPWKPGNSKVWTPVSKRRCNSGGSATLQRCNSHGSATLQRSTSISLPQNILSLNNVFTVTSFNTSPVPRPSSASSGFVDSSEGSTSSSTRWNSGGPCDFNPRRRLSLSQEHITETGNLLPSANSTPTSTPELSRRQGLLRCRSQPCVLNEKKSRLKRRREEDVRWNRPSLDFFKMTRTLKNSKSLCSLDYEDDDDDTQMKTIVSSPCDSNDLMNIITPGSSPMKEQLDEVRHHGSCQGSFKTRDYKKAAAVCESDEDTSDCESTEEGIFPLDCGDLDLEQIENN.

2 disordered regions span residues 198–236 (TSPV…FNPR) and 248–269 (ETGN…LSRR). Over residues 205 to 229 (SSASSGFVDSSEGSTSSSTRWNSGG) the composition is skewed to low complexity. Over residues 248-265 (ETGNLLPSANSTPTSTPE) the composition is skewed to polar residues. The Nuclear localization signal signature appears at 285–293 (KKSRLKRRR).

This sequence belongs to the FAM53 family.

It is found in the nucleus. Its function is as follows. May play an important role in neural development; the dorsomedial roof of the third ventricle. The chain is Protein FAM53A from Gallus gallus (Chicken).